The sequence spans 642 residues: Mini-chromosome maintenance complex-binding protein (642 aa).

The segment covering 151-161 (ARVSPSTSYTP) has biased composition (polar residues). The segment at 151–188 (ARVSPSTSYTPSRHKRSYEDDEDMDLQPNKQKDQHMGA) is disordered. Position 154 is a phosphoserine (Ser154). Thr160 bears the Phosphothreonine mark. Ser167 and Ser298 each carry phosphoserine.

This sequence belongs to the MCMBP family. Interacts with the MCM complex: associates with the MCM3-7 complex which lacks MCM2, while it does not interact with the MCM complex when MCM2 is present (MCM2-7 complex). Interacts with the RPA complex, when composed of all RPA1, RPA2 and RPA3 components, but not with RPA1 or RPA2 alone.

It localises to the nucleus. Its function is as follows. Associated component of the MCM complex that acts as a regulator of DNA replication. Binds to the MCM complex during late S phase and promotes the disassembly of the MCM complex from chromatin, thereby acting as a key regulator of pre-replication complex (pre-RC) unloading from replicated DNA. Can dissociate the MCM complex without addition of ATP; probably acts by destabilizing interactions of each individual subunits of the MCM complex. Required for sister chromatid cohesion. The chain is Mini-chromosome maintenance complex-binding protein (MCMBP) from Bos taurus (Bovine).